A 452-amino-acid polypeptide reads, in one-letter code: Mitochondrial import inner membrane translocase subunit TIM50 (452 aa).

Residues 1–23 constitute a mitochondrion transit peptide; it reads MSLSKLTQTCFSRHQAKTFIRLY. The Mitochondrial matrix portion of the chain corresponds to 24-167; it reads SSDFKSLLGP…RRKRMERNTR (144 aa). 2 disordered regions span residues 96–115 and 130–153; these read IEAE…TSSA and ESAA…GNAE. The span at 131–144 shows a compositional bias: low complexity; the sequence is SAASKSSSSSGGSS. A helical membrane pass occupies residues 168–188; that stretch reads IGAYVLFGGSIIGFISFCFYY. Residues 189-452 lie on the Mitochondrial intermembrane side of the membrane; the sequence is GRAQRDEFGN…LFGSRRHVNA (264 aa). One can recognise an FCP1 homology domain in the interval 243–387; it reads YLQPKYTIVI…VDLAELLKTI (145 aa).

The protein belongs to the TIM50 family.

The protein localises to the mitochondrion inner membrane. Essential component of the TIM23 complex, a complex that mediates the translocation of transit peptide-containing proteins across the mitochondrial inner membrane. The protein is Mitochondrial import inner membrane translocase subunit TIM50 (scpl-4) of Caenorhabditis elegans.